A 405-amino-acid chain; its full sequence is Probable tRNA sulfurtransferase (405 aa).

The region spanning Asp60–Thr165 is the THUMP domain. Residues Met183–Leu184, His208–Phe209, Arg265, Gly287, and Gln296 contribute to the ATP site.

It belongs to the ThiI family.

It localises to the cytoplasm. It carries out the reaction [ThiI sulfur-carrier protein]-S-sulfanyl-L-cysteine + a uridine in tRNA + 2 reduced [2Fe-2S]-[ferredoxin] + ATP + H(+) = [ThiI sulfur-carrier protein]-L-cysteine + a 4-thiouridine in tRNA + 2 oxidized [2Fe-2S]-[ferredoxin] + AMP + diphosphate. The enzyme catalyses [ThiS sulfur-carrier protein]-C-terminal Gly-Gly-AMP + S-sulfanyl-L-cysteinyl-[cysteine desulfurase] + AH2 = [ThiS sulfur-carrier protein]-C-terminal-Gly-aminoethanethioate + L-cysteinyl-[cysteine desulfurase] + A + AMP + 2 H(+). It participates in cofactor biosynthesis; thiamine diphosphate biosynthesis. Catalyzes the ATP-dependent transfer of a sulfur to tRNA to produce 4-thiouridine in position 8 of tRNAs, which functions as a near-UV photosensor. Also catalyzes the transfer of sulfur to the sulfur carrier protein ThiS, forming ThiS-thiocarboxylate. This is a step in the synthesis of thiazole, in the thiamine biosynthesis pathway. The sulfur is donated as persulfide by IscS. The sequence is that of Probable tRNA sulfurtransferase from Lactiplantibacillus plantarum (strain ATCC BAA-793 / NCIMB 8826 / WCFS1) (Lactobacillus plantarum).